Reading from the N-terminus, the 492-residue chain is MTFRGDTAVVVLAAGAGTRMRSDTPKVLHTLAGRSMLSHSLHAMAKLAPQHLVVVLGHCHERISPLVDELAESLGRTINVTLQDRPLGTGDAVRCGLSALPADYSGIVVVTAGDTPLLDAETVADLIETHSATSSAVTVLTTTLSDPHGYGRILRTQDNAVMAIVEQTDATPSQREIREVNAGVYAFEITALQSALSRLSSDNAQQELYLPDVIAILRRDGQTVSARHIDDSALVAGVNDRVQLAQLGAELNRRIVAAHQMAGVTVIDPATTWIDVDAAIGRDTVIQPGTQLLGHTQIGDRCEIGPDTTLTDVTVGDNASVVRTHGSSSSIGAAAAVGPFTYLRPGTVLGTGGKLGAFVETKNSTIGAGTKVPHLTYVGDADIGDDSNIGAGSVFVNYDGMTKNRATIGSHVRSGAGTRFVAPVNVGDGAYTGAGTVIRDDVPPGALAVSGGPQRNIEDWVQQKRPGTPSAEAARKASAEQSTPPPDADHPP.

A pyrophosphorylase region spans residues 1-241; sequence MTFRGDTAVV…SALVAGVNDR (241 aa). UDP-N-acetyl-alpha-D-glucosamine contacts are provided by residues 12–15, K26, Q83, and 88–89; these read LAAG and GT. D114 lines the Mg(2+) pocket. UDP-N-acetyl-alpha-D-glucosamine is bound by residues G151, E166, N181, and N239. N239 provides a ligand contact to Mg(2+). The segment at 242 to 262 is linker; it reads VQLAQLGAELNRRIVAAHQMA. Positions 263 to 492 are N-acetyltransferase; the sequence is GVTVIDPATT…TPPPDADHPP (230 aa). Residues R344 and K362 each contribute to the UDP-N-acetyl-alpha-D-glucosamine site. H374 (proton acceptor) is an active-site residue. UDP-N-acetyl-alpha-D-glucosamine is bound by residues Y377 and N388. Residues A391, 397 to 398, and A434 each bind acetyl-CoA; that span reads NY. Positions 443–492 are disordered; sequence PPGALAVSGGPQRNIEDWVQQKRPGTPSAEAARKASAEQSTPPPDADHPP.

In the N-terminal section; belongs to the N-acetylglucosamine-1-phosphate uridyltransferase family. This sequence in the C-terminal section; belongs to the transferase hexapeptide repeat family. In terms of assembly, homotrimer. It depends on Mg(2+) as a cofactor.

It is found in the cytoplasm. It catalyses the reaction alpha-D-glucosamine 1-phosphate + acetyl-CoA = N-acetyl-alpha-D-glucosamine 1-phosphate + CoA + H(+). The catalysed reaction is N-acetyl-alpha-D-glucosamine 1-phosphate + UTP + H(+) = UDP-N-acetyl-alpha-D-glucosamine + diphosphate. It functions in the pathway nucleotide-sugar biosynthesis; UDP-N-acetyl-alpha-D-glucosamine biosynthesis; N-acetyl-alpha-D-glucosamine 1-phosphate from alpha-D-glucosamine 6-phosphate (route II): step 2/2. It participates in nucleotide-sugar biosynthesis; UDP-N-acetyl-alpha-D-glucosamine biosynthesis; UDP-N-acetyl-alpha-D-glucosamine from N-acetyl-alpha-D-glucosamine 1-phosphate: step 1/1. Its pathway is bacterial outer membrane biogenesis; LPS lipid A biosynthesis. Its function is as follows. Catalyzes the last two sequential reactions in the de novo biosynthetic pathway for UDP-N-acetylglucosamine (UDP-GlcNAc). The C-terminal domain catalyzes the transfer of acetyl group from acetyl coenzyme A to glucosamine-1-phosphate (GlcN-1-P) to produce N-acetylglucosamine-1-phosphate (GlcNAc-1-P), which is converted into UDP-GlcNAc by the transfer of uridine 5-monophosphate (from uridine 5-triphosphate), a reaction catalyzed by the N-terminal domain. This is Bifunctional protein GlmU from Mycobacterium ulcerans (strain Agy99).